Consider the following 895-residue polypeptide: Splicing factor 3B subunit 2 (895 aa).

Positions 1 to 10 (MATEHPEPPK) are enriched in basic and acidic residues. Disordered stretches follow at residues 1–24 (MATEHPEPPKAELQLPPPPPPGHY), 65–136 (LNRP…LRVG), 197–373 (AKMG…EYVT), and 400–453 (KKEK…SKKK). K10 participates in a covalent cross-link: Glycyl lysine isopeptide (Lys-Gly) (interchain with G-Cter in SUMO2). The SAP domain maps to 24-58 (YGAWAAQELQAKLAEIGAPIQGNREELVERLQSYT). Pro residues-rich tracts occupy residues 90 to 114 (IPMPPPPLGLPPLQPPPPPPPPPPG) and 122 to 133 (AHPPNLGPPPPL). The stretch at 140 to 199 (ALSEEERLKLAQQQAALLMQQEERAKQQGDHSLKEHELLEQQKRAAVLLEQERQQEIAKM) forms a coiled coil. Low complexity predominate over residues 218-238 (PLGPRVAAPVGPVGPTPTVLP). Omega-N-methylarginine occurs at positions 222, 245, and 247. Pro residues predominate over residues 241 to 254 (APVPRPRGPPPPPG). K275 carries the post-translational modification N6-acetyllysine. Residues 277–286 (LQLKESRQEE) show a composition bias toward basic and acidic residues. Residue K280 forms a Glycyl lysine isopeptide (Lys-Gly) (interchain with G-Cter in SUMO2) linkage. The residue at position 289 (S289) is a Phosphoserine. Residue T298 is modified to Phosphothreonine. 2 positions are modified to phosphoserine: S307 and S309. The residue at position 311 (T311) is a Phosphothreonine. S317 is subject to Phosphoserine. Basic residues predominate over residues 322 to 338 (EKNRKRRNRKKKKKPQR). Residues 347-359 (SGDREKDSTRSRG) are compositionally biased toward basic and acidic residues. Phosphoserine occurs at positions 360 and 362. Glycyl lysine isopeptide (Lys-Gly) (interchain with G-Cter in SUMO2) cross-links involve residues K400 and K412. Composition is skewed to basic and acidic residues over residues 400-414 (KKEKEKEPEKLDKLE) and 422-431 (KGFEEEHKDS). The tract at residues 401–550 (KEKEKEPEKL…QEKEEQKTMK (150 aa)) is required for interaction with PRMT9. A phosphoserine mark is found at S431, S435, and S436. K492 is covalently cross-linked (Glycyl lysine isopeptide (Lys-Gly) (interchain with G-Cter in SUMO2)). R508 carries the omega-N-methylarginine; by PRMT9; alternate modification. The residue at position 508 (R508) is a Symmetric dimethylarginine; by PRMT9; alternate. R515 is modified (omega-N-methylarginine). K543 participates in a covalent cross-link: Glycyl lysine isopeptide (Lys-Gly) (interchain with G-Cter in SUMO2). Residues 691 to 757 (AAEFQTKTEE…PGGFSSVPAG (67 aa)) are disordered. The segment covering 712 to 732 (EPSDEESSEEEEEEESDEDKP) has biased composition (acidic residues). K770 is covalently cross-linked (Glycyl lysine isopeptide (Lys-Gly) (interchain with G-Cter in SUMO2)). T780 carries the phosphothreonine modification. Glycyl lysine isopeptide (Lys-Gly) (interchain with G-Cter in SUMO2) cross-links involve residues K790, K843, and K857. Basic and acidic residues predominate over residues 844 to 869 (YEEHVREQQAQVEKEDFSDMVAEHAA). The segment at 844–895 (YEEHVREQQAQVEKEDFSDMVAEHAAKQKQKKRKAQPQDSRGGSKKYKEFKF) is disordered. S861 carries the post-translational modification Phosphoserine.

In terms of assembly, component of the 17S U2 SnRNP complex, a ribonucleoprotein complex that contains small nuclear RNA (snRNA) U2 and a number of specific proteins. Part of the SF3B subcomplex of the 17S U2 SnRNP complex. SF3B associates with the splicing subcomplex SF3A and a 12S RNA unit to form the U2 small nuclear ribonucleoproteins complex (U2 snRNP). Within the SF3B complex, interacts directly with SF3B4. Found in a complex with PRMT9, SF3B2 and SF3B4. Interacts (Arg-508-methylated form) with SMN1 (via Tudor domain). Interacts with RBM7. Interacts with ERCC6. Component of the minor spliceosome. Within this complex, interacts with SCNM1 and CRIPT. As to quaternary structure, (Microbial infection) Interacts with HIV-1 Vpr. In terms of processing, methylation at Arg-508 by PRMT9 is required for the interaction with SMN1.

It localises to the nucleus. The protein localises to the nucleus speckle. Functionally, component of the 17S U2 SnRNP complex of the spliceosome, a large ribonucleoprotein complex that removes introns from transcribed pre-mRNAs. The 17S U2 SnRNP complex (1) directly participates in early spliceosome assembly and (2) mediates recognition of the intron branch site during pre-mRNA splicing by promoting the selection of the pre-mRNA branch-site adenosine, the nucleophile for the first step of splicing. Within the 17S U2 SnRNP complex, SF3B2 is part of the SF3B subcomplex, which is required for 'A' complex assembly formed by the stable binding of U2 snRNP to the branchpoint sequence in pre-mRNA. Sequence independent binding of SF3A and SF3B subcomplexes upstream of the branch site is essential, it may anchor U2 snRNP to the pre-mRNA. May also be involved in the assembly of the 'E' complex. Also acts as a component of the minor spliceosome, which is involved in the splicing of U12-type introns in pre-mRNAs. This Homo sapiens (Human) protein is Splicing factor 3B subunit 2 (SF3B2).